The chain runs to 255 residues: 5'-nucleotidase SurE (255 aa).

D8, D9, S39, and N91 together coordinate a divalent metal cation.

Belongs to the SurE nucleotidase family. A divalent metal cation serves as cofactor.

The protein resides in the cytoplasm. The enzyme catalyses a ribonucleoside 5'-phosphate + H2O = a ribonucleoside + phosphate. Nucleotidase that shows phosphatase activity on nucleoside 5'-monophosphates. The sequence is that of 5'-nucleotidase SurE from Acinetobacter baumannii (strain ATCC 17978 / DSM 105126 / CIP 53.77 / LMG 1025 / NCDC KC755 / 5377).